Reading from the N-terminus, the 452-residue chain is Bifunctional protein GlmU (452 aa).

Positions 1–224 (MNIVILAAGM…EWETHGVNSK (224 aa)) are pyrophosphorylase. UDP-N-acetyl-alpha-D-glucosamine-binding positions include 6-9 (LAAG), Lys20, Gln71, 76-77 (GT), 98-100 (YGD), Gly135, Glu149, Asn164, and Asn222. Residue Asp100 participates in Mg(2+) binding. A Mg(2+)-binding site is contributed by Asn222. The linker stretch occupies residues 225 to 245 (VQLAELERIHQRNIAHALLEQ). The N-acetyltransferase stretch occupies residues 246-452 (GVTLADPARI…NWQRPVKIKK (207 aa)). Positions 328 and 346 each coordinate UDP-N-acetyl-alpha-D-glucosamine. The active-site Proton acceptor is His358. 2 residues coordinate UDP-N-acetyl-alpha-D-glucosamine: Tyr361 and Asn372. Acetyl-CoA-binding positions include Ala375, 381–382 (NY), Ser400, Ala418, and Arg435.

The protein in the N-terminal section; belongs to the N-acetylglucosamine-1-phosphate uridyltransferase family. In the C-terminal section; belongs to the transferase hexapeptide repeat family. Homotrimer. Mg(2+) serves as cofactor.

It is found in the cytoplasm. The enzyme catalyses alpha-D-glucosamine 1-phosphate + acetyl-CoA = N-acetyl-alpha-D-glucosamine 1-phosphate + CoA + H(+). It carries out the reaction N-acetyl-alpha-D-glucosamine 1-phosphate + UTP + H(+) = UDP-N-acetyl-alpha-D-glucosamine + diphosphate. It participates in nucleotide-sugar biosynthesis; UDP-N-acetyl-alpha-D-glucosamine biosynthesis; N-acetyl-alpha-D-glucosamine 1-phosphate from alpha-D-glucosamine 6-phosphate (route II): step 2/2. The protein operates within nucleotide-sugar biosynthesis; UDP-N-acetyl-alpha-D-glucosamine biosynthesis; UDP-N-acetyl-alpha-D-glucosamine from N-acetyl-alpha-D-glucosamine 1-phosphate: step 1/1. Its pathway is bacterial outer membrane biogenesis; LPS lipid A biosynthesis. Its function is as follows. Catalyzes the last two sequential reactions in the de novo biosynthetic pathway for UDP-N-acetylglucosamine (UDP-GlcNAc). The C-terminal domain catalyzes the transfer of acetyl group from acetyl coenzyme A to glucosamine-1-phosphate (GlcN-1-P) to produce N-acetylglucosamine-1-phosphate (GlcNAc-1-P), which is converted into UDP-GlcNAc by the transfer of uridine 5-monophosphate (from uridine 5-triphosphate), a reaction catalyzed by the N-terminal domain. The sequence is that of Bifunctional protein GlmU from Janthinobacterium sp. (strain Marseille) (Minibacterium massiliensis).